Consider the following 150-residue polypeptide: Endoribonuclease YbeY (150 aa).

Positions 112, 116, and 122 each coordinate Zn(2+).

The protein belongs to the endoribonuclease YbeY family. Zn(2+) is required as a cofactor.

It localises to the cytoplasm. Its function is as follows. Single strand-specific metallo-endoribonuclease involved in late-stage 70S ribosome quality control and in maturation of the 3' terminus of the 16S rRNA. This chain is Endoribonuclease YbeY, found in Geobacter metallireducens (strain ATCC 53774 / DSM 7210 / GS-15).